We begin with the raw amino-acid sequence, 317 residues long: Proline-rich protein 2 (317 aa).

Positions 1–16 are cleaved as a signal peptide; it reads MLVVLFTVALLALSSA. Residues 15–317 form a disordered region; the sequence is SAQGPREELQ…PPQGRPQGPQ (303 aa). The span at 32-44 shows a compositional bias: pro residues; the sequence is QRPPPSGSQPRPP. N-linked (GlcNAc...) asparagine glycosylation is present at Asn-46. Pro residues-rich tracts occupy residues 51 to 183 and 204 to 288; these read GPPP…PPAG and QSPP…PTQG. Residues 289–305 show a composition bias toward low complexity; it reads PHPTGGPQQTPPLAGNP. Over residues 306–317 the composition is skewed to pro residues; sequence QGPPQGRPQGPQ.

The protein resides in the secreted. This Mus musculus (Mouse) protein is Proline-rich protein 2 (Prp2).